Consider the following 219-residue polypeptide: MSIQVFCDFDGTITNNDNIMSIMEKFAPPEAEEVKNRILSQELSIQEGVSQLFQLIPTNLHDQIIQFLIETAEIRNGFHEFIQFVNENNISFYVISGGMDFFVYPLLQGLIPKEQIYCNETDFSNEYITVNWPHPCDRLCQNHCGLCKSSLIRKLSDTNDFHIVIGDSITDLQAAKQADKVFARDFLITKCEENHISYTPFETFHDVQTELKHLLEVKL.

It belongs to the HAD-like hydrolase superfamily. MtnX family.

The catalysed reaction is 2-hydroxy-5-methylsulfanyl-3-oxopent-1-enyl phosphate + H2O = 1,2-dihydroxy-5-(methylsulfanyl)pent-1-en-3-one + phosphate. It participates in amino-acid biosynthesis; L-methionine biosynthesis via salvage pathway; L-methionine from S-methyl-5-thio-alpha-D-ribose 1-phosphate: step 4/6. Its function is as follows. Dephosphorylates 2-hydroxy-3-keto-5-methylthiopentenyl-1-phosphate (HK-MTPenyl-1-P) yielding 1,2-dihydroxy-3-keto-5-methylthiopentene (DHK-MTPene). This is 2-hydroxy-3-keto-5-methylthiopentenyl-1-phosphate phosphatase from Bacillus cereus (strain 03BB102).